Consider the following 146-residue polypeptide: Cytochrome b5 type B (146 aa).

The propeptide occupies 1–11; it reads MATPEASGSGR. In terms of domain architecture, Cytochrome b5 heme-binding spans 20–96; the sequence is VTYYRLEEVA…LKQYYIGDVH (77 aa). Lys-30 is modified (N6-acetyllysine). Heme-binding residues include His-55 and His-79. The residue at position 80 (Ser-80) is a Phosphoserine. A helical transmembrane segment spans residues 119–136; that stretch reads WAYWIVPIVGAILIGFLY.

The protein belongs to the cytochrome b5 family. Component of a complex composed of cytochrome b5, NADH-cytochrome b5 reductase (CYB5R3) and MTARC2.

Its subcellular location is the mitochondrion outer membrane. Functionally, cytochrome b5 is a membrane-bound hemoprotein functioning as an electron carrier for several membrane-bound oxygenases. In Rattus norvegicus (Rat), this protein is Cytochrome b5 type B (Cyb5b).